A 129-amino-acid polypeptide reads, in one-letter code: MSNIPTELKYASSHEWIRKEEDGSYTVGITEHAQELLGDMVFVELPEVGDTVTAGDDCAVAESVKAASDIYAPISGEVIAVNEALEDSPELVNSDAYGEGWFFRVMPSDESEVDALLDAEGYQAVIDEE.

Residues 24 to 106 enclose the Lipoyl-binding domain; it reads SYTVGITEHA…YGEGWFFRVM (83 aa). N6-lipoyllysine is present on Lys65.

This sequence belongs to the GcvH family. In terms of assembly, the glycine cleavage system is composed of four proteins: P, T, L and H. (R)-lipoate serves as cofactor.

In terms of biological role, the glycine cleavage system catalyzes the degradation of glycine. The H protein shuttles the methylamine group of glycine from the P protein to the T protein. The chain is Glycine cleavage system H protein from Shewanella oneidensis (strain ATCC 700550 / JCM 31522 / CIP 106686 / LMG 19005 / NCIMB 14063 / MR-1).